The chain runs to 209 residues: Small ribosomal subunit protein uS3 (209 aa).

The KH type-2 domain occupies 38 to 107 (IRKVIKSKYA…RFIVNVEEIK (70 aa)).

Belongs to the universal ribosomal protein uS3 family. As to quaternary structure, part of the 30S ribosomal subunit. Forms a tight complex with proteins S10 and S14.

Its function is as follows. Binds the lower part of the 30S subunit head. Binds mRNA in the 70S ribosome, positioning it for translation. This is Small ribosomal subunit protein uS3 from Thermosipho melanesiensis (strain DSM 12029 / CIP 104789 / BI429).